Consider the following 217-residue polypeptide: Thiosulfate dehydrogenase electron acceptor (217 aa).

The N-terminal stretch at 1 to 28 is a signal peptide; that stretch reads MRQFIPMRRVLAVATLGALFWAAPASWA. Cytochrome c domains are found at residues 29-104 and 116-206; these read AAPP…SKLK and AAAA…AAQP. Heme c-binding residues include Cys-37, Cys-40, His-41, Cys-137, Cys-140, and His-141.

Post-translationally, binds 2 heme c groups covalently per subunit.

Acts as an electron acceptor for the thiosulfate dehydrogenase TsdA. In Thiomonas intermedia (strain K12) (Thiobacillus intermedius), this protein is Thiosulfate dehydrogenase electron acceptor (tsdB).